The sequence spans 153 residues: Mediator of RNA polymerase II transcription subunit 22 (153 aa).

It belongs to the Mediator complex subunit 22 family. As to quaternary structure, component of the Mediator complex.

The protein localises to the nucleus. In terms of biological role, component of the Mediator complex, a coactivator involved in the regulated transcription of nearly all RNA polymerase II-dependent genes. Mediator functions as a bridge to convey information from gene-specific regulatory proteins to the basal RNA polymerase II transcription machinery. Mediator is recruited to promoters by direct interactions with regulatory proteins and serves as a scaffold for the assembly of a functional preinitiation complex with RNA polymerase II and the general transcription factors. In Caenorhabditis briggsae, this protein is Mediator of RNA polymerase II transcription subunit 22 (mdt-22).